The primary structure comprises 526 residues: Aspartate ammonia-lyase (526 aa).

The segment at 1–44 is disordered; it reads MSKTSNKSSADSKNDAKAEDIVNGENQIATNESQSSDSAAVSER. Residues 10–20 show a composition bias toward basic and acidic residues; the sequence is ADSKNDAKAED. Residues 24–39 are compositionally biased toward polar residues; the sequence is GENQIATNESQSSDSA. Positions 155, 194, 195, 196, and 241 each coordinate L-aspartate. The segment at 371-380 is SS loop; sequence GSSIMPAKVN. Residue Ser372 is the Proton acceptor of the active site. Residues Ser373 and Lys378 each contribute to the L-aspartate site.

This sequence belongs to the class-II fumarase/aspartase family. Aspartase subfamily. As to quaternary structure, homotetramer.

It catalyses the reaction L-aspartate = fumarate + NH4(+). Catalyzes the reversible conversion of L-aspartate to fumarate and ammonia. The polypeptide is Aspartate ammonia-lyase (Corynebacterium glutamicum (strain ATCC 13032 / DSM 20300 / JCM 1318 / BCRC 11384 / CCUG 27702 / LMG 3730 / NBRC 12168 / NCIMB 10025 / NRRL B-2784 / 534)).